Reading from the N-terminus, the 22-residue chain is Chlorophyllase type 1 (22 aa).

The protein belongs to the AB hydrolase superfamily. Lipase family.

The enzyme catalyses a chlorophyll + H2O = a chlorophyllide + phytol + H(+). It functions in the pathway porphyrin-containing compound metabolism; chlorophyll degradation. Functionally, catalyzes the hydrolysis of ester bond in chlorophyll to yield chlorophyllide and phytol. The sequence is that of Chlorophyllase type 1 from Chenopodium album (Fat hen).